A 422-amino-acid polypeptide reads, in one-letter code: N-acylglucosamine 2-epimerase (422 aa).

The interval 185-206 (LLNLVEQLGEADEELAGISAEL) is leucine-zipper.

Belongs to the N-acylglucosamine 2-epimerase family. In terms of assembly, homodimer. Forms a heterodimer with renin and inhibits its activity.

The catalysed reaction is an N-acyl-D-glucosamine = an N-acyl-D-mannosamine. Its pathway is amino-sugar metabolism; N-acetylneuraminate degradation. Its function is as follows. Catalyzes the interconversion of N-acetylglucosamine to N-acetylmannosamine. Involved in the N-glycolylneuraminic acid (Neu5Gc) degradation pathway. The chain is N-acylglucosamine 2-epimerase (RENBP) from Bos taurus (Bovine).